Reading from the N-terminus, the 262-residue chain is uncharacterized protein (262 aa).

The region spanning 5–223 (IKVENLTKYF…MAYIEYLDNG (219 aa)) is the ABC transporter domain. 37–44 (GHNGAGKT) serves as a coordination point for ATP.

It belongs to the ABC transporter superfamily.

This is an uncharacterized protein from Methanocaldococcus jannaschii (strain ATCC 43067 / DSM 2661 / JAL-1 / JCM 10045 / NBRC 100440) (Methanococcus jannaschii).